Here is a 344-residue protein sequence, read N- to C-terminus: GPALPP motifs-containing protein 1 (344 aa).

Positions 1 to 309 (MARDLIGPAL…QERIPFDRDK (309 aa)) are disordered. At Ala-2 the chain carries N-acetylalanine. A GPALPP motif 1 motif is present at residues 7-12 (GPALPP). At Ser-28 the chain carries Phosphoserine. A GPALPP motif 2 motif is present at residues 30–35 (GPALPP). Acidic residues-rich tracts occupy residues 58–67 (GNQESEEDDT) and 80–93 (DDND…DDDG). Residues 96-101 (GPALPP) carry the GPALPP motif 3 motif. Ser-109 carries the post-translational modification Phosphoserine. Pro residues predominate over residues 111–120 (PRPIIGPALP). The GPALPP motif 4 motif lies at 116–121 (GPALPP). The span at 128–137 (QKSDKGRDDP) shows a compositional bias: basic and acidic residues. At Thr-142 the chain carries Phosphothreonine. Ser-144 and Ser-145 each carry phosphoserine. Composition is skewed to basic and acidic residues over residues 167–191 (EFEK…KPIV), 231–265 (PADR…KRLA), 273–283 (ESKRSESLMDI), and 291–309 (KAAE…DRDK). A Glycyl lysine isopeptide (Lys-Gly) (interchain with G-Cter in SUMO2) cross-link involves residue Lys-275. Residue Lys-312 forms a Glycyl lysine isopeptide (Lys-Gly) (interchain with G-Cter in SUMO2) linkage.

In Pongo abelii (Sumatran orangutan), this protein is GPALPP motifs-containing protein 1 (GPALPP1).